The chain runs to 121 residues: Fluoride-specific ion channel FluC 1 (121 aa).

Transmembrane regions (helical) follow at residues 3–23 (YVYI…ISFL), 35–55 (VANL…IAFF), 64–84 (AITT…LELI), and 92–112 (FITL…LCYV). Na(+)-binding residues include G71 and T74.

It belongs to the fluoride channel Fluc/FEX (TC 1.A.43) family.

The protein resides in the cell membrane. It catalyses the reaction fluoride(in) = fluoride(out). Its activity is regulated as follows. Na(+) is not transported, but it plays an essential structural role and its presence is essential for fluoride channel function. Functionally, fluoride-specific ion channel. Important for reducing fluoride concentration in the cell, thus reducing its toxicity. In Staphylococcus aureus (strain bovine RF122 / ET3-1), this protein is Fluoride-specific ion channel FluC 1.